The chain runs to 360 residues: DNA replication and repair protein RecF (360 aa).

Residue 33 to 40 (GENGSGKT) coordinates ATP.

This sequence belongs to the RecF family.

The protein localises to the cytoplasm. In terms of biological role, the RecF protein is involved in DNA metabolism; it is required for DNA replication and normal SOS inducibility. RecF binds preferentially to single-stranded, linear DNA. It also seems to bind ATP. The chain is DNA replication and repair protein RecF from Rickettsia rickettsii (strain Iowa).